Consider the following 277-residue polypeptide: Ribonuclease HII (277 aa).

The tract at residues 1–32 (MIRNQANKPGRAKAATAARKSPLTKSAAKPAA) is disordered. Positions 20–32 (KSPLTKSAAKPAA) are enriched in low complexity. Residues 64–252 (WPVAGCDEAG…VVAARRKHQP (189 aa)) enclose the RNase H type-2 domain. Residues D70, E71, and D161 each contribute to the a divalent metal cation site.

Belongs to the RNase HII family. Mn(2+) is required as a cofactor. It depends on Mg(2+) as a cofactor.

The protein resides in the cytoplasm. It catalyses the reaction Endonucleolytic cleavage to 5'-phosphomonoester.. Functionally, endonuclease that specifically degrades the RNA of RNA-DNA hybrids. In Bradyrhizobium sp. (strain ORS 278), this protein is Ribonuclease HII.